Reading from the N-terminus, the 948-residue chain is Valine--tRNA ligase (948 aa).

The 'HIGH' region signature appears at 40–50; that stretch reads PNVTGSLHMGH. Positions 551 to 555 match the 'KMSKS' region motif; the sequence is KMSKS. Lys554 contacts ATP. The stretch at 879 to 945 forms a coiled coil; that stretch reads LIDKGAELAR…GKLAEQHARI (67 aa).

This sequence belongs to the class-I aminoacyl-tRNA synthetase family. ValS type 1 subfamily. In terms of assembly, monomer.

It localises to the cytoplasm. It carries out the reaction tRNA(Val) + L-valine + ATP = L-valyl-tRNA(Val) + AMP + diphosphate. Functionally, catalyzes the attachment of valine to tRNA(Val). As ValRS can inadvertently accommodate and process structurally similar amino acids such as threonine, to avoid such errors, it has a 'posttransfer' editing activity that hydrolyzes mischarged Thr-tRNA(Val) in a tRNA-dependent manner. The sequence is that of Valine--tRNA ligase from Pseudomonas syringae pv. tomato (strain ATCC BAA-871 / DC3000).